The chain runs to 271 residues: Phthiotriol/phenolphthiotriol dimycocerosates methyltransferase 1 (271 aa).

It belongs to the methyltransferase superfamily. Phthiotriol/phenolphthiotriol dimycocerosates methyltransferase family.

Catalyzes the methylation of the lipid moiety of the intermediate compounds phthiotriol and glycosylated phenolphthiotriol dimycoserosates to form phthiocerol dimycocerosates (DIM A) and glycosylated phenolphthiocerol dimycocerosates (PGL). In Mycobacterium ulcerans (strain Agy99), this protein is Phthiotriol/phenolphthiotriol dimycocerosates methyltransferase 1.